The sequence spans 186 residues: Lipoprotein signal peptidase (186 aa).

A run of 3 helical transmembrane segments spans residues 11–31 (WIPL…KLLV), 44–64 (VLGD…FSIG), and 70–90 (VLRT…IVFS). Active-site residues include Asp128 and Asp150. The helical transmembrane segment at 145–165 (AFNIADAVIMTCGLLLIISFI) threads the bilayer.

Belongs to the peptidase A8 family.

Its subcellular location is the cell inner membrane. It catalyses the reaction Release of signal peptides from bacterial membrane prolipoproteins. Hydrolyzes -Xaa-Yaa-Zaa-|-(S,diacylglyceryl)Cys-, in which Xaa is hydrophobic (preferably Leu), and Yaa (Ala or Ser) and Zaa (Gly or Ala) have small, neutral side chains.. Its pathway is protein modification; lipoprotein biosynthesis (signal peptide cleavage). Its function is as follows. This protein specifically catalyzes the removal of signal peptides from prolipoproteins. This Treponema pallidum (strain Nichols) protein is Lipoprotein signal peptidase.